The sequence spans 576 residues: Proline--tRNA ligase (576 aa).

The protein belongs to the class-II aminoacyl-tRNA synthetase family. ProS type 1 subfamily. In terms of assembly, homodimer.

It localises to the cytoplasm. The enzyme catalyses tRNA(Pro) + L-proline + ATP = L-prolyl-tRNA(Pro) + AMP + diphosphate. In terms of biological role, catalyzes the attachment of proline to tRNA(Pro) in a two-step reaction: proline is first activated by ATP to form Pro-AMP and then transferred to the acceptor end of tRNA(Pro). As ProRS can inadvertently accommodate and process non-cognate amino acids such as alanine and cysteine, to avoid such errors it has two additional distinct editing activities against alanine. One activity is designated as 'pretransfer' editing and involves the tRNA(Pro)-independent hydrolysis of activated Ala-AMP. The other activity is designated 'posttransfer' editing and involves deacylation of mischarged Ala-tRNA(Pro). The misacylated Cys-tRNA(Pro) is not edited by ProRS. In Leptospira borgpetersenii serovar Hardjo-bovis (strain JB197), this protein is Proline--tRNA ligase.